A 263-amino-acid polypeptide reads, in one-letter code: Benzil reductase ((S)-benzoin forming) IRC24 (263 aa).

Ile-7 and Asn-86 together coordinate NADP(+). Ser-143 serves as the catalytic Proton donor. The NADP(+) site is built by Tyr-157, Lys-161, Val-190, and Thr-192. Tyr-157 (proton acceptor) is an active-site residue. Residue Lys-161 is the Lowers pKa of active site Tyr of the active site.

It belongs to the short-chain dehydrogenases/reductases (SDR) family.

It carries out the reaction (S)-benzoin + NADP(+) = benzil + NADPH + H(+). The enzyme catalyses 2-hydroxy-1-phenyl-1-propanone + NADP(+) = 1-phenyl-1,2-propanedione + NADPH + H(+). Its function is as follows. Reduces benzil stereospecifically to (S)-benzoin. Also reduces 1-phenyl-1,2-propanedione to 2-hydroxy-1-phenyl-1-propanone. Is probably involved in a pathway contributing to genomic integrity. This Saccharomyces cerevisiae (strain ATCC 204508 / S288c) (Baker's yeast) protein is Benzil reductase ((S)-benzoin forming) IRC24 (IRC24).